Reading from the N-terminus, the 68-residue chain is Putative membrane protein insertion efficiency factor (68 aa).

Belongs to the UPF0161 family.

The protein localises to the cell membrane. Its function is as follows. Could be involved in insertion of integral membrane proteins into the membrane. The chain is Putative membrane protein insertion efficiency factor from Herpetosiphon aurantiacus (strain ATCC 23779 / DSM 785 / 114-95).